We begin with the raw amino-acid sequence, 260 residues long: Protein TONNEAU 1a (260 aa).

A LisH domain is found at 73–105 (SGRLLSALICEYLDWAQLNHTLIVYQPESNLPK). Disordered stretches follow at residues 147-224 (TQGM…EEVT) and 236-260 (DRKTRNLTSSWRNVRDGTNEEEGRD). The segment covering 161 to 175 (ESSSSLESRNPPRRS) has biased composition (low complexity). Positions 248–260 (NVRDGTNEEEGRD) are enriched in basic and acidic residues.

Interacts with CEN1, LNG1/TRM2 and LNG2/TRM1 (via C-terminus).

The protein resides in the cytoplasm. It is found in the cytoskeleton. Functionally, involved in the control of the dynamic organization of the cortical cytoskeleton. May play a role in the organization of microtubule arrays at the centrosome through interaction with centrin 1 (CEN1). This is Protein TONNEAU 1a (TON1A) from Arabidopsis thaliana (Mouse-ear cress).